The sequence spans 399 residues: Elongation factor Tu (399 aa).

A tr-type G domain is found at 10–209; the sequence is KPHVNIGTIG…AVDSYIPTPV (200 aa). Residues 19-26 are G1; it reads GHVDHGKT. 19–26 provides a ligand contact to GTP; sequence GHVDHGKT. Thr-26 contributes to the Mg(2+) binding site. Residues 60–64 are G2; it reads GITIA. The interval 81-84 is G3; it reads DCPG. GTP is bound by residues 81–85 and 136–139; these read DCPGH and NKAD. Residues 136 to 139 are G4; the sequence is NKAD. The segment at 174 to 176 is G5; that stretch reads SAL.

It belongs to the TRAFAC class translation factor GTPase superfamily. Classic translation factor GTPase family. EF-Tu/EF-1A subfamily. Monomer.

The protein localises to the cytoplasm. The enzyme catalyses GTP + H2O = GDP + phosphate + H(+). GTP hydrolase that promotes the GTP-dependent binding of aminoacyl-tRNA to the A-site of ribosomes during protein biosynthesis. The sequence is that of Elongation factor Tu from Campylobacter fetus subsp. fetus (strain 82-40).